The primary structure comprises 415 residues: Serine hydroxymethyltransferase 2 (415 aa).

(6S)-5,6,7,8-tetrahydrofolate contacts are provided by residues leucine 121 and 125–127 (GHL). The residue at position 229 (lysine 229) is an N6-(pyridoxal phosphate)lysine.

The protein belongs to the SHMT family. Homodimer. Pyridoxal 5'-phosphate is required as a cofactor.

It is found in the cytoplasm. It carries out the reaction (6R)-5,10-methylene-5,6,7,8-tetrahydrofolate + glycine + H2O = (6S)-5,6,7,8-tetrahydrofolate + L-serine. It functions in the pathway one-carbon metabolism; tetrahydrofolate interconversion. Its pathway is amino-acid biosynthesis; glycine biosynthesis; glycine from L-serine: step 1/1. Its function is as follows. Catalyzes the reversible interconversion of serine and glycine with tetrahydrofolate (THF) serving as the one-carbon carrier. This reaction serves as the major source of one-carbon groups required for the biosynthesis of purines, thymidylate, methionine, and other important biomolecules. Also exhibits THF-independent aldolase activity toward beta-hydroxyamino acids, producing glycine and aldehydes, via a retro-aldol mechanism. The chain is Serine hydroxymethyltransferase 2 from Bordetella parapertussis (strain 12822 / ATCC BAA-587 / NCTC 13253).